A 371-amino-acid polypeptide reads, in one-letter code: Homeobox protein Nkx-2.1 (371 aa).

The segment at residues 161–220 (RRKRRVLFSQAQVYELERRFKQQKYLSAPEREHLASMIHLTPTQVKIWFQNHRYKMKRQA) is a DNA-binding region (homeobox). 2 disordered regions span residues 219–294 (QAKD…QHQA) and 310–339 (GAGL…SPAA). Over residues 233–243 (SGGGGGGGGTG) the composition is skewed to gly residues. The span at 244–253 (CPQQQQAQQQ) shows a compositional bias: low complexity. The residue at position 254 (serine 254) is a Phosphoserine. Residues 272–294 (AGAPAPGAASLQGHAQQQAQHQA) are compositionally biased toward low complexity.

It belongs to the NK-2 homeobox family. As to quaternary structure, interacts with WWTR1. In terms of processing, phosphorylated on serine residues by STK3/MST2. In terms of tissue distribution, thyroid and lung.

It is found in the nucleus. Functionally, transcription factor that binds and activates the promoter of thyroid specific genes such as thyroglobulin, thyroperoxidase, and thyrotropin receptor. Crucial in the maintenance of the thyroid differentiation phenotype. May play a role in lung development and surfactant homeostasis. Forms a regulatory loop with GRHL2 that coordinates lung epithelial cell morphogenesis and differentiation. Activates the transcription of GNRHR and plays a role in enhancing the circadian oscillation of its gene expression. Represses the transcription of the circadian transcriptional repressor NR1D1. The sequence is that of Homeobox protein Nkx-2.1 from Homo sapiens (Human).